Consider the following 301-residue polypeptide: Pantothenate synthetase (301 aa).

Residue 30 to 37 coordinates ATP; that stretch reads MGNLHEGH. H37 (proton donor) is an active-site residue. Q61 contributes to the (R)-pantoate binding site. Residue Q61 coordinates beta-alanine. 149 to 152 contacts ATP; it reads GEKD. Q155 contacts (R)-pantoate. Residues V178 and 186-189 each bind ATP; that span reads MSSR.

It belongs to the pantothenate synthetase family. In terms of assembly, homodimer.

It is found in the cytoplasm. It carries out the reaction (R)-pantoate + beta-alanine + ATP = (R)-pantothenate + AMP + diphosphate + H(+). It functions in the pathway cofactor biosynthesis; (R)-pantothenate biosynthesis; (R)-pantothenate from (R)-pantoate and beta-alanine: step 1/1. Catalyzes the condensation of pantoate with beta-alanine in an ATP-dependent reaction via a pantoyl-adenylate intermediate. This chain is Pantothenate synthetase, found in Vibrio parahaemolyticus serotype O3:K6 (strain RIMD 2210633).